Consider the following 84-residue polypeptide: Translational regulator CsrA (84 aa).

Belongs to the CsrA/RsmA family. Homodimer; the beta-strands of each monomer intercalate to form a hydrophobic core, while the alpha-helices form wings that extend away from the core.

It is found in the cytoplasm. In terms of biological role, a translational regulator that binds mRNA to regulate translation initiation and/or mRNA stability. Usually binds in the 5'-UTR at or near the Shine-Dalgarno sequence preventing ribosome-binding, thus repressing translation. Its main target seems to be the major flagellin gene, while its function is anatagonized by FliW. This chain is Translational regulator CsrA, found in Leptospira borgpetersenii serovar Hardjo-bovis (strain JB197).